A 151-amino-acid polypeptide reads, in one-letter code: Putative superoxide dismutase [Cu-Zn] (151 aa).

Cu cation-binding residues include His-43, His-45, and His-60. A disulfide bridge connects residues Cys-54 and Cys-144. 4 residues coordinate Zn(2+): His-60, His-68, His-77, and Asp-80. Position 118 (His-118) interacts with Cu cation.

It belongs to the Cu-Zn superoxide dismutase family. It depends on Cu cation as a cofactor. The cofactor is Zn(2+).

It catalyses the reaction 2 superoxide + 2 H(+) = H2O2 + O2. Functionally, nonessential for normal virus replication. Could be either non-functional or with a low activity. This Lepidoptera (butterflies and moths) protein is Putative superoxide dismutase [Cu-Zn] (SOD).